The primary structure comprises 461 residues: Protein DVR-1 homolog (461 aa).

Positions 1 to 30 (MEYSRKTYLDLNIMAKYILILSLFFGPGLS) are cleaved as a signal peptide. Positions 31 to 338 (WDVFYSGDED…QKKGGKRPRK (308 aa)) are excised as a propeptide. N-linked (GlcNAc...) asparagine glycosylation is present at Asn149. The tract at residues 317–351 (SHLRRNRRAATRQKKGGKRPRKPDTDNDIASRDSA) is disordered. Residues 318–337 (HLRRNRRAATRQKKGGKRPR) are compositionally biased toward basic residues. A compositionally biased stretch (basic and acidic residues) spans 338-347 (KPDTDNDIAS). 3 disulfides stabilise this stretch: Cys360–Cys426, Cys389–Cys458, and Cys393–Cys460. Residue Asn402 is glycosylated (N-linked (GlcNAc...) asparagine).

Belongs to the TGF-beta family. Homodimer; disulfide-linked.

The protein localises to the secreted. The polypeptide is Protein DVR-1 homolog (DVR1) (Strongylocentrotus purpuratus (Purple sea urchin)).